The primary structure comprises 138 residues: MLIPRKVKHRKQHHPRQRGIASGGTAVNFGDYGIQALEHAYVTNRQIESARIAINRHIKRGGKVWINVFPDRPLTKKPAETRMGSGKGSPEWWVVNVKPGRVLFELSYPNEQTARAALTRAIHKLPIKARIVTREDQF.

A compositionally biased stretch (basic residues) spans 1–17 (MLIPRKVKHRKQHHPRQ). The tract at residues 1–22 (MLIPRKVKHRKQHHPRQRGIAS) is disordered.

This sequence belongs to the universal ribosomal protein uL16 family. Part of the 50S ribosomal subunit.

Its function is as follows. Binds 23S rRNA and is also seen to make contacts with the A and possibly P site tRNAs. This Mycobacterium avium (strain 104) protein is Large ribosomal subunit protein uL16.